A 335-amino-acid polypeptide reads, in one-letter code: tRNA N6-adenosine threonylcarbamoyltransferase (335 aa).

2 residues coordinate Fe cation: histidine 111 and histidine 115. Residues leucine 133–glycine 137, aspartate 166, glycine 179, and asparagine 276 each bind substrate. A Fe cation-binding site is contributed by aspartate 301.

The protein belongs to the KAE1 / TsaD family. Fe(2+) is required as a cofactor.

Its subcellular location is the cytoplasm. The catalysed reaction is L-threonylcarbamoyladenylate + adenosine(37) in tRNA = N(6)-L-threonylcarbamoyladenosine(37) in tRNA + AMP + H(+). In terms of biological role, required for the formation of a threonylcarbamoyl group on adenosine at position 37 (t(6)A37) in tRNAs that read codons beginning with adenine. Is involved in the transfer of the threonylcarbamoyl moiety of threonylcarbamoyl-AMP (TC-AMP) to the N6 group of A37, together with TsaE and TsaB. TsaD likely plays a direct catalytic role in this reaction. In Wolbachia sp. subsp. Brugia malayi (strain TRS), this protein is tRNA N6-adenosine threonylcarbamoyltransferase.